The following is a 201-amino-acid chain: UPF0637 protein LCA_0842 (201 aa).

Belongs to the UPF0637 family.

The polypeptide is UPF0637 protein LCA_0842 (Latilactobacillus sakei subsp. sakei (strain 23K) (Lactobacillus sakei subsp. sakei)).